A 1253-amino-acid polypeptide reads, in one-letter code: Structural polyprotein (1253 aa).

The host transcription inhibition stretch occupies residues 43–77; sequence VQAQQMQQLISAVSALTTKQNGKAPKKPKKKPQKA. The disordered stretch occupies residues 58-110; sequence LTTKQNGKAPKKPKKKPQKAKAKKNEQQKKNENKKPPPKQKNPAKKKKPGKRE. The segment covering 66–79 has biased composition (basic residues); the sequence is APKKPKKKPQKAKA. The short motif at 70–106 is the Nuclear localization signal element; the sequence is PKKKPQKAKAKKNEQQKKNENKKPPPKQKNPAKKKKP. The span at 80-92 shows a compositional bias: basic and acidic residues; sequence KKNEQQKKNENKK. The tract at residues 90 to 121 is binding to the viral RNA; it reads NKKPPPKQKNPAKKKKPGKRERMCMKIENDCI. Basic residues predominate over residues 93 to 108; that stretch reads PPPKQKNPAKKKKPGK. A ribosome-binding region spans residues 106–120; it reads PGKRERMCMKIENDC. A disulfide bridge links Cys-120 with Cys-135. Positions 120 to 268 constitute a Peptidase S3 domain; sequence CIFEVKLDGK…RYTPEGTEEW (149 aa). The Charge relay system role is filled by His-146. A Nuclear export signal motif is present at residues 151–161; sequence IDNPDLAKLTY. The tract at residues 162–167 is interaction with spike glycoprotein E2; the sequence is KKSSKY. Asp-168 acts as the Charge relay system in catalysis. A dimerization of the capsid protein region spans residues 190–200; sequence PEGHYNWHHGA. The Charge relay system role is filled by Ser-220. Residues 226-230 are dimerization of the capsid protein; that stretch reads DNKGR. Residues 269 to 280 are functions as an uncleaved signal peptide for the precursor of protein E3/E2; sequence SAALMMCVLANV. 3 cysteine pairs are disulfide-bonded: Cys-275/Cys-284, Cys-289/Cys-293, and Cys-292/Cys-324. Asn-279 is a glycosylation site (N-linked (GlcNAc...) asparagine; by host). N-linked (GlcNAc...) asparagine; by host glycosylation occurs at Asn-325. Residues 333 to 694 lie on the Extracellular side of the membrane; the sequence is SVTKHFNVYK…EIILYYYGLY (362 aa). 6 cysteine pairs are disulfide-bonded: Cys-351–Cys-457, Cys-354–Cys-360, Cys-423–Cys-437, Cys-485–Cys-597, Cys-533–Cys-557, and Cys-535–Cys-552. Interaction with host Mxra8 receptor stretches follow at residues 358 to 361 and 394 to 396; these read QFCY and HEH. An interaction with host Mxra8 receptor region spans residues 516–519; that stretch reads QSGN. N-linked (GlcNAc...) asparagine; by host glycosylation occurs at Asn-532. Positions 548–554 are interaction with host Mxra8 receptor; the sequence is TINSCKI. A glycan (N-linked (GlcNAc...) asparagine; by host) is linked at Asn-594. The chain crosses the membrane as a helical span at residues 695-715; that stretch reads PAATIAAVSAAGLAVVLSLLA. Topologically, residues 716 to 754 are cytoplasmic; it reads SCYMFATARRKCLTPYALTPGAVVPVTLGVLCCAPRAHA. Cys-717 carries the S-stearoyl cysteine; by host lipid modification. The interaction with the capsid protein stretch occupies residues 722–726; the sequence is TARRK. Residue Cys-727 is the site of S-stearoyl cysteine; by host attachment. A transient transmembrane before p62-6K protein processing region spans residues 727–747; the sequence is CLTPYALTPGAVVPVTLGVLC. A disulfide bridge links Cys-727 with Cys-748. S-palmitoyl cysteine; by host attachment occurs at residues Cys-747 and Cys-748. At 755–769 the chain is on the extracellular side; sequence ASFAESMAYLWDENQ. Asn-768 is a glycosylation site (N-linked (GlcNAc...) asparagine; by host). A helical membrane pass occupies residues 770 to 790; sequence TLFWLELATPLAAIIILVCCL. Topologically, residues 791 to 792 are cytoplasmic; the sequence is KN. The helical transmembrane segment at 793–813 threads the bilayer; it reads LLCCCKPLSFLVLVSLGTPVV. Extracellular-side segments run 814–815 and 826–1227; these read KS and VGFP…WVQR. Intrachain disulfides connect Cys-864-Cys-929, Cys-877-Cys-909, Cys-878-Cys-911, and Cys-883-Cys-893. The tract at residues 899-916 is E1 fusion peptide loop; it reads VYPFMWGGAYCFCDTENT. N-linked (GlcNAc...) asparagine; by host glycans are attached at residues Asn-956 and Asn-1085. 4 cysteine pairs are disulfide-bonded: Cys-1074–Cys-1086, Cys-1116–Cys-1191, Cys-1121–Cys-1195, and Cys-1143–Cys-1185. The chain crosses the membrane as a helical span at residues 1228 to 1248; it reads VAGGLGGLTLAAVAVLILVTC. Residue Cys-1248 is the site of S-palmitoyl cysteine; by host attachment. At 1249 to 1253 the chain is on the cytoplasmic side; that stretch reads VTMRR.

As to quaternary structure, homodimer. Homomultimer. Interacts with host karyopherin KPNA4; this interaction allows the nuclear import of the viral capsid protein. Interacts with spike glycoprotein E2. Interacts with host IRAK1; the interaction leads to inhibition of IRAK1-dependent signaling. The precursor of protein E3/E2 and E1 form a heterodimer shortly after synthesis. In terms of assembly, interacts with spike glycoprotein E2. The precursor of protein E3/E2 and E1 form a heterodimer shortly after synthesis. Processing of the precursor of protein E3/E2 into E2 and E3 results in a heterodimer of the spike glycoproteins E2 and E1. Spike at virion surface are constituted of a trimer of E2-E1 heterodimers. After target cell attachment and endocytosis, E1 change conformation to form homotrimers. Interacts with 6K protein. E1/E2 heterodimer interacts with host LDLR. As to quaternary structure, interacts with spike glycoprotein E1. Processing of the precursor of protein E3/E2 into E2 and E3 results in a heterodimer of the spike glycoproteins E2 and E1. Spike at virion surface are constituted of a trimer of E2-E1 heterodimers. Interacts with 6K protein. Interacts with host MXRA8; this interaction mediates virus entry. Oligomer. Interacts with spike glycoprotein E1. Interacts with spike glycoprotein E2. Post-translationally, structural polyprotein: Specific enzymatic cleavages in vivo yield mature proteins. Capsid protein is auto-cleaved during polyprotein translation, unmasking a signal peptide at the N-terminus of the precursor of E3/E2. The remaining polyprotein is then targeted to the host endoplasmic reticulum, where host signal peptidase cleaves it into pE2, 6K and E1 proteins. pE2 is further processed to mature E3 and E2 by host furin in trans-Golgi vesicle. In terms of processing, palmitoylated via thioester bonds. These palmitoylations may induce disruption of the C-terminus transmembrane. This would result in the reorientation of E2 C-terminus from lumenal to cytoplasmic side. N-glycosylated. Post-translationally, palmitoylated via thioester bonds.

Its subcellular location is the virion. The protein localises to the host cytoplasm. It localises to the host cell membrane. It is found in the host nucleus. The protein resides in the virion membrane. Its subcellular location is the host Golgi apparatus. The protein localises to the host trans-Golgi network. It localises to the host endoplasmic reticulum. It catalyses the reaction Autocatalytic release of the core protein from the N-terminus of the togavirus structural polyprotein by hydrolysis of a -Trp-|-Ser- bond.. Functionally, forms an icosahedral capsid with a T=4 symmetry composed of 240 copies of the capsid protein surrounded by a lipid membrane through which penetrate 80 spikes composed of trimers of E1-E2 heterodimers. The capsid protein binds to the viral RNA genome at a site adjacent to a ribosome binding site for viral genome translation following genome release. Possesses a protease activity that results in its autocatalytic cleavage from the nascent structural protein. Following its self-cleavage, the capsid protein transiently associates with ribosomes, and within several minutes the protein binds to viral RNA and rapidly assembles into icosahedric core particles. The resulting nucleocapsid eventually associates with the cytoplasmic domain of the spike glycoprotein E2 at the cell membrane, leading to budding and formation of mature virions. In case of infection, new virions attach to target cells and after clathrin-mediated endocytosis their membrane fuses with the host endosomal membrane. This leads to the release of the nucleocapsid into the cytoplasm, followed by an uncoating event necessary for the genomic RNA to become accessible. The uncoating might be triggered by the interaction of capsid proteins with ribosomes. Binding of ribosomes would release the genomic RNA since the same region is genomic RNA-binding and ribosome-binding. Specifically inhibits interleukin-1 receptor-associated kinase 1/IRAK1-dependent signaling during viral entry, representing a means by which the alphaviruses may evade innate immune detection and activation prior to viral gene expression. In terms of biological role, provides the signal sequence for the translocation of the precursor of protein E3/E2 to the host endoplasmic reticulum. Furin-cleaved E3 remains associated with spike glycoprotein E1 and mediates pH protection of the latter during the transport via the secretory pathway. After virion release from the host cell, the assembly protein E3 is gradually released in the extracellular space. Plays a role in viral attachment to target host cell, by binding to the cell receptor MXRA8. The host LDLR may also act as a cell receptor for viral entry. Synthesized as a p62 precursor which is processed by furin at the cell membrane just before virion budding, giving rise to E2-E1 heterodimer. The p62-E1 heterodimer is stable, whereas E2-E1 is unstable and dissociate at low pH. p62 is processed at the last step, presumably to avoid E1 fusion activation before its final export to cell surface. E2 C-terminus contains a transitory transmembrane that would be disrupted by palmitoylation, resulting in reorientation of the C-terminal tail from lumenal to cytoplasmic side. This step is critical since E2 C-terminus is involved in budding by interacting with capsid proteins. This release of E2 C-terminus in cytoplasm occurs lately in protein export, and precludes premature assembly of particles at the endoplasmic reticulum membrane. Its function is as follows. Acts as a viroporin that participates in virus glycoprotein processing and transport to the plasma membrane, cell permeabilization and budding of viral particles. Disrupts the calcium homeostasis of the cell, probably at the endoplasmic reticulum level. This leads to cytoplasmic calcium elevation. Because of its lipophilic properties, the 6K protein is postulated to influence the selection of lipids that interact with the transmembrane domains of the glycoproteins, which, in turn, affects the deformability of the bilayer required for the extreme curvature that occurs as budding proceeds. Present in low amount in virions, about 3% compared to viral glycoproteins. Functionally, class II viral fusion protein. Fusion activity is inactive as long as E1 is bound to E2 in mature virion. After virus attachment to target cell via host MXRA8 and endocytosis, acidification of the endosome induce dissociation of E1/E2 heterodimer and concomitant trimerization of the E1 subunits. This E1 trimer is fusion active, and promotes release of viral nucleocapsid in cytoplasm after endosome and viral membrane fusion. Efficient fusion requires the presence of cholesterol and sphingolipid in the target membrane. This is Structural polyprotein from Aedes vexans (Inland floodwater mosquito).